Consider the following 425-residue polypeptide: Histidine--tRNA ligase (425 aa).

It belongs to the class-II aminoacyl-tRNA synthetase family. As to quaternary structure, homodimer.

The protein localises to the cytoplasm. The catalysed reaction is tRNA(His) + L-histidine + ATP = L-histidyl-tRNA(His) + AMP + diphosphate + H(+). The protein is Histidine--tRNA ligase of Pelotomaculum thermopropionicum (strain DSM 13744 / JCM 10971 / SI).